The chain runs to 589 residues: Sphingosine-1-phosphate lyase (589 aa).

The Lumenal segment spans residues 1-58 (MSGVSNKTVSINGWYGMPIHLLREEGDFAQFMILTINELKIAIHGYLRNTPWYNMLKD). Asn-6 carries N-linked (GlcNAc...) asparagine glycosylation. Residues 59-76 (YLFVIFCYKLISNFFYLL) form a helical membrane-spanning segment. Residues 77-589 (KVYGPVRLAV…LGPGEDTATK (513 aa)) are Cytoplasmic-facing. At Lys-380 the chain carries N6-(pyridoxal phosphate)lysine.

It belongs to the group II decarboxylase family. Sphingosine-1-phosphate lyase subfamily. In terms of assembly, homodimer. The cofactor is pyridoxal 5'-phosphate. In terms of processing, glycosylated.

Its subcellular location is the endoplasmic reticulum membrane. The catalysed reaction is sphinganine 1-phosphate = hexadecanal + phosphoethanolamine. It carries out the reaction (4R)-hydroxysphinganine 1-phosphate = (2R)-hydroxyhexadecanal + phosphoethanolamine. Its pathway is lipid metabolism; sphingolipid metabolism. Functionally, sphingosine-1-phosphate lyase that cleaves phosphorylated sphingoid bases (PSBs), such as sphingosine-1-phosphate, into fatty aldehydes and phosphoethanolamine. Prefers C-16 dihydrosphingosine-l-phosphate (DHS-P) as a substrate. Regulates intracellular levels of sphingolipid long-chain base phosphates (LCBPs). Plays a role in the regulation of global responses to nutrient deprivation in yeast. The polypeptide is Sphingosine-1-phosphate lyase (Saccharomyces cerevisiae (strain ATCC 204508 / S288c) (Baker's yeast)).